The sequence spans 355 residues: Elongation factor Ts (355 aa).

The involved in Mg(2+) ion dislocation from EF-Tu stretch occupies residues 82–85 (TDFV).

The protein belongs to the EF-Ts family.

The protein localises to the cytoplasm. Associates with the EF-Tu.GDP complex and induces the exchange of GDP to GTP. It remains bound to the aminoacyl-tRNA.EF-Tu.GTP complex up to the GTP hydrolysis stage on the ribosome. The protein is Elongation factor Ts of Helicobacter pylori (strain P12).